Reading from the N-terminus, the 354-residue chain is Probable protein phosphatase 2C 69 (354 aa).

The region spanning 33–279 (SYGYASSAGK…DNITCVVVRF (247 aa)) is the PPM-type phosphatase domain. Mn(2+) is bound by residues Asp-69, Gly-70, Asp-231, and Asp-270. The tract at residues 289–354 (HISSSSSKEA…LERNSVTDKV (66 aa)) is disordered. Composition is skewed to polar residues over residues 309 to 328 (ISSN…PENV) and 336 to 348 (ASRS…LERN).

It belongs to the PP2C family. It depends on Mg(2+) as a cofactor. The cofactor is Mn(2+).

The enzyme catalyses O-phospho-L-seryl-[protein] + H2O = L-seryl-[protein] + phosphate. It carries out the reaction O-phospho-L-threonyl-[protein] + H2O = L-threonyl-[protein] + phosphate. The chain is Probable protein phosphatase 2C 69 from Arabidopsis thaliana (Mouse-ear cress).